A 270-amino-acid polypeptide reads, in one-letter code: Exosome complex component rrp43 (270 aa).

Belongs to the RNase PH family. As to quaternary structure, component of the RNA exosome complex. Specifically part of the catalytically inactive RNA exosome core complex (Exo-9) which may associate with the catalytic subunits rrp66 and dis3 in cytoplasmic- and nuclear-specific RNA exosome complex forms. Exo-9 is formed by a hexameric base ring of RNase PH domain-containing subunits and a cap ring consisting of csl4, rrp4 and rrp40.

Its subcellular location is the cytoplasm. The protein localises to the nucleus. The protein resides in the nucleolus. Its function is as follows. Non-catalytic component of the RNA exosome complex which has 3'-&gt;5' exoribonuclease activity and participates in a multitude of cellular RNA processing and degradation events. In the nucleus, the RNA exosome complex is involved in proper maturation of stable RNA species such as rRNA, snRNA and snoRNA, in the elimination of RNA processing by-products and non-coding 'pervasive' transcripts, such as antisense RNA species and cryptic unstable transcripts (CUTs), and of mRNAs with processing defects, thereby limiting or excluding their export to the cytoplasm. In the cytoplasm, the RNA exosome complex is involved in general mRNA turnover and in RNA surveillance pathways, preventing translation of aberrant mRNAs. The catalytic inactive RNA exosome core complex of 9 subunits (Exo-9) is proposed to play a pivotal role in the binding and presentation of RNA for ribonucleolysis, and to serve as a scaffold for the association with catalytic subunits and accessory proteins or complexes. ski6 is part of the hexameric ring of RNase PH domain-containing subunits proposed to form a central channel which threads RNA substrates for degradation. The polypeptide is Exosome complex component rrp43 (rrp43) (Schizosaccharomyces pombe (strain 972 / ATCC 24843) (Fission yeast)).